Here is a 141-residue protein sequence, read N- to C-terminus: Large ribosomal subunit protein uL11 (141 aa).

Belongs to the universal ribosomal protein uL11 family. Part of the ribosomal stalk of the 50S ribosomal subunit. Interacts with L10 and the large rRNA to form the base of the stalk. L10 forms an elongated spine to which L12 dimers bind in a sequential fashion forming a multimeric L10(L12)X complex. In terms of processing, one or more lysine residues are methylated.

Its function is as follows. Forms part of the ribosomal stalk which helps the ribosome interact with GTP-bound translation factors. The chain is Large ribosomal subunit protein uL11 from Streptococcus pneumoniae serotype 2 (strain D39 / NCTC 7466).